Here is a 393-residue protein sequence, read N- to C-terminus: ATP phosphoribosyltransferase regulatory subunit (393 aa).

Belongs to the class-II aminoacyl-tRNA synthetase family. HisZ subfamily. As to quaternary structure, heteromultimer composed of HisG and HisZ subunits.

The protein resides in the cytoplasm. It participates in amino-acid biosynthesis; L-histidine biosynthesis; L-histidine from 5-phospho-alpha-D-ribose 1-diphosphate: step 1/9. Functionally, required for the first step of histidine biosynthesis. May allow the feedback regulation of ATP phosphoribosyltransferase activity by histidine. In Nitrosospira multiformis (strain ATCC 25196 / NCIMB 11849 / C 71), this protein is ATP phosphoribosyltransferase regulatory subunit.